Here is a 357-residue protein sequence, read N- to C-terminus: MQLKDRHTVEGGRERITLVPESLDDLWHLAYVLEPGDFVAGDTHRRIQRNDDQMRDTGGEREHMFVTIDVGDVEFHKFSNRLRVSGTIEDCSREDQLGLHHTLNVAEREELEVEKHWQPDQLNRLNEAVEATDQPDVAIATVEEGEAHIHVVQQYGVDEQGSFTATTGKGEQNDRGRDELFGTLADALARMQADAIILAGPGFTKQDALDHITEEYPDLQETITMVDTSAVGGRGVHEVLKRGAVEDVQEETRIAEESELIDELTTQMATDGKAAYGIDEVQKAVEFGAVEDLLILDERLRLERAGEGDWVDVDVNDLVRTVEQQGGSVTVFSHEFAPGEQLRNLGGIGAVLRYRLD.

The protein belongs to the eukaryotic release factor 1 family. Pelota subfamily. In terms of assembly, monomer. Requires a divalent metal cation as cofactor.

The protein localises to the cytoplasm. Its function is as follows. May function in recognizing stalled ribosomes, interact with stem-loop structures in stalled mRNA molecules, and effect endonucleolytic cleavage of the mRNA. May play a role in the release non-functional ribosomes and degradation of damaged mRNAs. Has endoribonuclease activity. The polypeptide is Protein pelota homolog (Halobacterium salinarum (strain ATCC 29341 / DSM 671 / R1)).